The primary structure comprises 392 residues: Chalcone synthase-like protein 1 (392 aa).

Cysteine 166 is a catalytic residue.

Belongs to the thiolase-like superfamily. Chalcone/stilbene synthases family. In terms of tissue distribution, expressed at the same level in leaves and in glandular trichomes.

Its subcellular location is the cytoplasm. Chalcone synthase that may use malonyl-CoA and hexanoyl-CoA as substrates but without producing olivetol or olivetolic acid. The polypeptide is Chalcone synthase-like protein 1 (CAN383) (Cannabis sativa (Hemp)).